A 1755-amino-acid chain; its full sequence is Transposon Ty1-OL Gag-Pol polyprotein (1755 aa).

3 stretches are compositionally biased toward polar residues: residues Met1–Ser23, Thr48–Ser60, and Gln127–Phe152. Disordered regions lie at residues Met1–Gln93, Pro126–Pro173, and Gly352–Thr421. Residues Thr153 to Thr165 are compositionally biased toward low complexity. The interval Asn299 to His401 is RNA-binding. Over residues Asn402–Ser418 the composition is skewed to low complexity. At Ser416 the chain carries Phosphoserine. Asp461 functions as the For protease activity; shared with dimeric partner in the catalytic mechanism. An integrase-type zinc finger-like region spans residues Asn583 to Cys640. The region spanning Asn660–Pro835 is the Integrase catalytic domain. Asp671 and Asp736 together coordinate Mg(2+). Disordered regions lie at residues Ser956–Lys1087, Arg1092–Pro1111, and Asp1130–Ala1171. The segment covering Ser960 to Thr969 has biased composition (low complexity). The segment covering Ser1005 to Thr1015 has biased composition (polar residues). A compositionally biased stretch (basic and acidic residues) spans Glu1038 to Ser1053. 2 stretches are compositionally biased toward polar residues: residues Tyr1054–Asp1082 and Pro1101–Pro1111. The Bipartite nuclear localization signal signature appears at Lys1178–Arg1212. The Reverse transcriptase Ty1/copia-type domain maps to Asn1338–Gln1476. Asp1346, Asp1427, Asp1428, Asp1610, Glu1652, and Asp1685 together coordinate Mg(2+). The RNase H Ty1/copia-type domain occupies Asp1610–Lys1752.

As to quaternary structure, the capsid protein forms a homotrimer, from which the VLPs are assembled. The protease is a homodimer, whose active site consists of two apposed aspartic acid residues. Post-translationally, initially, virus-like particles (VLPs) are composed of the structural unprocessed proteins Gag and Gag-Pol, and also contain the host initiator methionine tRNA (tRNA(i)-Met) which serves as a primer for minus-strand DNA synthesis, and a dimer of genomic Ty RNA. Processing of the polyproteins occurs within the particle and proceeds by an ordered pathway, called maturation. First, the protease (PR) is released by autocatalytic cleavage of the Gag-Pol polyprotein yielding capsid protein p45 and a Pol-p154 precursor protein. This cleavage is a prerequisite for subsequent processing of Pol-p154 at the remaining sites to release the mature structural and catalytic proteins. Maturation takes place prior to the RT reaction and is required to produce transposition-competent VLPs.

Its subcellular location is the cytoplasm. It localises to the nucleus. The enzyme catalyses DNA(n) + a 2'-deoxyribonucleoside 5'-triphosphate = DNA(n+1) + diphosphate. It carries out the reaction Endonucleolytic cleavage to 5'-phosphomonoester.. Functionally, capsid protein (CA) is the structural component of the virus-like particle (VLP), forming the shell that encapsulates the retrotransposons dimeric RNA genome. The particles are assembled from trimer-clustered units and there are holes in the capsid shells that allow for the diffusion of macromolecules. CA also has nucleocapsid-like chaperone activity, promoting primer tRNA(i)-Met annealing to the multipartite primer-binding site (PBS), dimerization of Ty1 RNA and initiation of reverse transcription. The aspartyl protease (PR) mediates the proteolytic cleavages of the Gag and Gag-Pol polyproteins after assembly of the VLP. In terms of biological role, reverse transcriptase/ribonuclease H (RT) is a multifunctional enzyme that catalyzes the conversion of the retro-elements RNA genome into dsDNA within the VLP. The enzyme displays a DNA polymerase activity that can copy either DNA or RNA templates, and a ribonuclease H (RNase H) activity that cleaves the RNA strand of RNA-DNA heteroduplexes during plus-strand synthesis and hydrolyzes RNA primers. The conversion leads to a linear dsDNA copy of the retrotransposon that includes long terminal repeats (LTRs) at both ends. Its function is as follows. Integrase (IN) targets the VLP to the nucleus, where a subparticle preintegration complex (PIC) containing at least integrase and the newly synthesized dsDNA copy of the retrotransposon must transit the nuclear membrane. Once in the nucleus, integrase performs the integration of the dsDNA into the host genome. This Saccharomyces cerevisiae (strain ATCC 204508 / S288c) (Baker's yeast) protein is Transposon Ty1-OL Gag-Pol polyprotein (TY1B-OL).